The following is a 440-amino-acid chain: Microtubule-associated tumor suppressor 1 homolog A (440 aa).

Residues 44 to 67 (KSRTNSKNPQPPTNGQPDLVPPES) form a disordered region. The stretch at 69-401 (SRNVEYYKAQ…RLSMENEELL (333 aa)) forms a coiled coil. The disordered stretch occupies residues 407–440 (GDLNSPRKISPSPSLNLQSPRTSGMFSSPPVSPR). Positions 417–432 (PSPSLNLQSPRTSGMF) are enriched in polar residues.

This sequence belongs to the MTUS1 family. In terms of assembly, homodimer.

The protein localises to the mitochondrion. Its subcellular location is the golgi apparatus. It localises to the cell membrane. It is found in the nucleus. In terms of biological role, may inhibit cell proliferation. This is Microtubule-associated tumor suppressor 1 homolog A (mtus1a) from Danio rerio (Zebrafish).